Consider the following 459-residue polypeptide: MAP kinase-interacting serine/threonine-protein kinase 2 (459 aa).

The segment at 37–67 (DFSPQCEARPDMPSSQPIDIPDAKKRGRKKK) is disordered. The Nuclear localization signal motif lies at 60 to 66 (KKRGRKK). S74 carries the post-translational modification Phosphoserine. The region spanning 84-368 (QLQEDVLGEG…AAQVLQHPWV (285 aa)) is the Protein kinase domain. Residues 90-98 (LGEGAHARV) and K113 contribute to the ATP site. Position 160-162 (160-162 (EKM)) interacts with staurosporine. D205 acts as the Proton acceptor in catalysis. Position 209 (E209) interacts with staurosporine. A phosphothreonine mark is found at T244 and T249. 3 residues coordinate Zn(2+): C299, C311, and C314. Residue T379 is modified to Phosphothreonine. Phosphoserine occurs at positions 431 and 434. Positions 438-442 (LAQRR) match the MAP kinase binding motif. Phosphoserine is present on S446. Residue T450 is modified to Phosphothreonine.

Belongs to the protein kinase superfamily. CAMK Ser/Thr protein kinase family. As to quaternary structure, interacts with ESR2 and EIF4E in the nucleus. Monomer. Interacts with the C-terminal regions of EIF4G1 and EIF4G2; this interaction is promoted when MAPK pathways are repressed but repressed upon ERK proteins activation. Also binds to dephosphorylated MAPK3/ERK1 and MAPK1/ERK2. Interaction with phosphorylated MAPK3/ERK1 and MAPK1/ERK2 protects it from dephosphorylation and inactivation. It depends on Mg(2+) as a cofactor. The cofactor is Zn(2+). Post-translationally, dual phosphorylation of Thr-244 and Thr-249 activates the kinase. Phosphorylation of Thr-379 activates the kinase. Phosphorylated upon arsenic trioxide As(2)O(3) treatment. Phosphorylated by MAPK1/ERK2, MAPK11 and MAPK14. Dephosphorylated by PP2A. Ubiquitously expressed in all tissues examined, with high levels in skeletal muscle and low levels in brain.

Its subcellular location is the cytoplasm. It localises to the nucleus. The protein resides in the PML body. The catalysed reaction is L-seryl-[protein] + ATP = O-phospho-L-seryl-[protein] + ADP + H(+). It catalyses the reaction L-threonyl-[protein] + ATP = O-phospho-L-threonyl-[protein] + ADP + H(+). With respect to regulation, inhibited by CGP57380 and staurosporine. In terms of biological role, serine/threonine-protein kinase that phosphorylates SFPQ/PSF, HNRNPA1 and EIF4E. May play a role in the response to environmental stress and cytokines. Appears to regulate translation by phosphorylating EIF4E, thus increasing the affinity of this protein for the 7-methylguanosine-containing mRNA cap. Required for mediating PP2A-inhibition-induced EIF4E phosphorylation. Triggers EIF4E shuttling from cytoplasm to nucleus. Enhances the formation of EIF4F complex in pachytene spermatocytes, thus promoting mRNA translation during spermatogenesis. Displays a high basal kinase activity. Acts as a mediator of the suppressive effects of IFNgamma on hematopoiesis. Negative regulator for signals that control generation of arsenic trioxide As(2)O(3)-dependent apoptosis and anti-leukemic responses. Involved in anti-apoptotic signaling in response to serum withdrawal. This chain is MAP kinase-interacting serine/threonine-protein kinase 2 (Mknk2), found in Mus musculus (Mouse).